Reading from the N-terminus, the 476-residue chain is Glycogen synthase (476 aa).

Residue K15 participates in ADP-alpha-D-glucose binding.

It belongs to the glycosyltransferase 1 family. Bacterial/plant glycogen synthase subfamily.

It catalyses the reaction [(1-&gt;4)-alpha-D-glucosyl](n) + ADP-alpha-D-glucose = [(1-&gt;4)-alpha-D-glucosyl](n+1) + ADP + H(+). Its pathway is glycan biosynthesis; glycogen biosynthesis. Synthesizes alpha-1,4-glucan chains using ADP-glucose. This chain is Glycogen synthase, found in Haemophilus influenzae (strain PittGG).